A 451-amino-acid chain; its full sequence is Tubulin gamma-2 chain (451 aa).

The residue at position 131 (Ser131) is a Phosphoserine; by BRSK1. 142–148 (AGGTGSG) is a binding site for GTP.

It belongs to the tubulin family. As to quaternary structure, component of the gamma-tubulin ring complex (gTuRC) consisting of TUBGCP2, TUBGCP3, TUBGCP4, TUBGCP5 and TUBGCP6 and gamma-tubulin TUBG1 or TUBG2. TUBGCP2, TUBGCP3, TUBGCP4, TUBGCP5 and TUBGCP6 assemble in a 5:5:2:1:1 stoichiometry; each is associated with a gamma-tubulin, thereby arranging 14 gamma-tubulins in a helical manner. Gamma-tubulin at the first position is blocked by TUBGCP3 at the last position, allowing 13 protafilaments to grow into a microtubule. Interacts with alpha-beta tubulin heterodimers; the interaction allows microtubules to nucleate from the gTuRC. Phosphorylation at Ser-131 by BRSK1 regulates centrosome duplication, possibly by mediating relocation of gamma-tubulin and its associated proteins from the cytoplasm to the centrosome.

The protein localises to the cytoplasm. Its subcellular location is the cytoskeleton. The protein resides in the microtubule organizing center. It is found in the centrosome. Tubulin is the major constituent of microtubules, protein filaments consisting of alpha- and beta-tubulin heterodimers. Gamma-tubulin is a key component of the gamma-tubulin ring complex (gTuRC) which mediates microtubule nucleation. The gTuRC regulates the minus-end nucleation of alpha-beta tubulin heterodimers that grow into microtubule protafilaments, a critical step in centrosome duplication and spindle formation. The sequence is that of Tubulin gamma-2 chain (Tubg2) from Mus musculus (Mouse).